Here is a 414-residue protein sequence, read N- to C-terminus: Glucose-1-phosphate adenylyltransferase (414 aa).

Alpha-D-glucose 1-phosphate contacts are provided by residues Tyr103, Gly168, 183–184 (EK), and Ser201.

This sequence belongs to the bacterial/plant glucose-1-phosphate adenylyltransferase family. As to quaternary structure, homotetramer.

The catalysed reaction is alpha-D-glucose 1-phosphate + ATP + H(+) = ADP-alpha-D-glucose + diphosphate. The protein operates within glycan biosynthesis; glycogen biosynthesis. Its function is as follows. Involved in the biosynthesis of ADP-glucose, a building block required for the elongation reactions to produce glycogen. Catalyzes the reaction between ATP and alpha-D-glucose 1-phosphate (G1P) to produce pyrophosphate and ADP-Glc. This chain is Glucose-1-phosphate adenylyltransferase, found in Thermus caldophilus.